The chain runs to 685 residues: ATP-dependent RNA helicase MSS116, mitochondrial (685 aa).

The N-terminal 34 residues, 1–34 (MLVLQRIPKRALQFNGVTGTVCSTRLFHHAFNLN), are a transit peptide targeting the mitochondrion. Positions 42–107 (SEERRYRNSN…NNGSRRRYQD (66 aa)) are disordered. Low complexity predominate over residues 58-69 (SDSNSNNKYRNS). Residues 70–86 (SYDDNRSRSNYGGDKRN) are compositionally biased toward basic and acidic residues. Over residues 88 to 99 (RNNNNYGNNRNN) the composition is skewed to low complexity. A Q motif motif is present at residues 138 to 166 (SLLEESLLDANVHKAISAMKFESLTPVQQ). Positions 170-357 (KPILTTENDV…ATIMNKKDCL (188 aa)) constitute a Helicase ATP-binding domain. 183 to 190 (AKTGTGKT) contributes to the ATP binding site. Positions 298–301 (DEAD) match the DEAD box motif. One can recognise a Helicase C-terminal domain in the interval 386–542 (SMVALIQSIE…EDYLNQDKEN (157 aa)). Residues 633-685 (DREFDDEDRYTSRSQNNYKSKQSSKSNRFEGRNDYSNSRRSHANQKRNFTFDD) form a disordered region. A compositionally biased stretch (low complexity) spans 644 to 658 (SRSQNNYKSKQSSKS).

It belongs to the DEAD box helicase family. DDX18/HAS1 subfamily.

It localises to the mitochondrion matrix. The enzyme catalyses ATP + H2O = ADP + phosphate + H(+). Functionally, ATP-dependent RNA helicase required for mitochondrial splicing of group I and II introns. Also required for efficient mitochondrial translation. This is ATP-dependent RNA helicase MSS116, mitochondrial (MSS116) from Kluyveromyces lactis (strain ATCC 8585 / CBS 2359 / DSM 70799 / NBRC 1267 / NRRL Y-1140 / WM37) (Yeast).